We begin with the raw amino-acid sequence, 376 residues long: Alcohol dehydrogenase 1 (376 aa).

N-acetylserine is present on Ser-2. Residues Cys-47, His-68, Cys-98, Cys-101, Cys-104, Cys-112, and Cys-176 each coordinate Zn(2+). NAD(+)-binding positions include 201 to 206 (GLGGVG), Asp-225, and Lys-230. At Lys-235 the chain carries N6-succinyllysine. Residue 294-296 (VGV) coordinates NAD(+). Lys-341 carries the N6-succinyllysine modification. An NAD(+)-binding site is contributed by Arg-371.

Belongs to the zinc-containing alcohol dehydrogenase family. Class-I subfamily. In terms of assembly, dimer of identical or non-identical chains of three types (A, B, C), which are coded by 3 separate genes at different loci. The cofactor is Zn(2+).

The protein resides in the cytoplasm. The enzyme catalyses a primary alcohol + NAD(+) = an aldehyde + NADH + H(+). It catalyses the reaction a secondary alcohol + NAD(+) = a ketone + NADH + H(+). In Rattus norvegicus (Rat), this protein is Alcohol dehydrogenase 1 (Adh1).